The primary structure comprises 168 residues: Cell division inhibitor SulA (168 aa).

The ftsZ binding stretch occupies residues 105–111 (ALQTGNY).

Belongs to the SulA family. Interacts with FtsZ. Is rapidly cleaved and degraded by the Lon protease once DNA damage is repaired.

Its function is as follows. Component of the SOS system and an inhibitor of cell division. Accumulation of SulA causes rapid cessation of cell division and the appearance of long, non-septate filaments. In the presence of GTP, binds a polymerization-competent form of FtsZ in a 1:1 ratio, thus inhibiting FtsZ polymerization and therefore preventing it from participating in the assembly of the Z ring. This mechanism prevents the premature segregation of damaged DNA to daughter cells during cell division. The sequence is that of Cell division inhibitor SulA from Erwinia pyrifoliae (strain DSM 12163 / CIP 106111 / Ep16/96).